Reading from the N-terminus, the 116-residue chain is G antigen 2B/2C (116 aa).

Positions Met-1–Cys-116 are disordered. 2 stretches are compositionally biased toward acidic residues: residues Phe-31–Glu-44 and Glu-86–Glu-95. Basic and acidic residues predominate over residues Glu-102 to Cys-116.

The protein belongs to the GAGE family. As to expression, expressed in a variety of tumor tissues but not in normal tissues, except testis.

Its function is as follows. Antigen, recognized on melanoma by autologous cytolytic T-lymphocytes. This is G antigen 2B/2C (GAGE2B) from Homo sapiens (Human).